The following is a 380-amino-acid chain: Alanine racemase (380 aa).

Lys-39 serves as the catalytic Proton acceptor; specific for D-alanine. Lys-39 carries the post-translational modification N6-(pyridoxal phosphate)lysine. Arg-137 contacts substrate. Tyr-263 serves as the catalytic Proton acceptor; specific for L-alanine. Position 310 (Met-310) interacts with substrate.

This sequence belongs to the alanine racemase family. Pyridoxal 5'-phosphate is required as a cofactor.

It catalyses the reaction L-alanine = D-alanine. Its pathway is amino-acid biosynthesis; D-alanine biosynthesis; D-alanine from L-alanine: step 1/1. Catalyzes the interconversion of L-alanine and D-alanine. May also act on other amino acids. This Macrococcus caseolyticus (strain JCSC5402) (Macrococcoides caseolyticum) protein is Alanine racemase (alr).